A 159-amino-acid chain; its full sequence is Transcription elongation factor GreA (159 aa).

Positions 3 to 37 (TNKEVVLTYEGLQKLEQELENLKTVKRREVAERIK) form a coiled coil.

The protein belongs to the GreA/GreB family.

Functionally, necessary for efficient RNA polymerase transcription elongation past template-encoded arresting sites. The arresting sites in DNA have the property of trapping a certain fraction of elongating RNA polymerases that pass through, resulting in locked ternary complexes. Cleavage of the nascent transcript by cleavage factors such as GreA or GreB allows the resumption of elongation from the new 3'terminus. GreA releases sequences of 2 to 3 nucleotides. This is Transcription elongation factor GreA from Acetivibrio thermocellus (strain ATCC 27405 / DSM 1237 / JCM 9322 / NBRC 103400 / NCIMB 10682 / NRRL B-4536 / VPI 7372) (Clostridium thermocellum).